The sequence spans 1481 residues: Cystic fibrosis transmembrane conductance regulator (1481 aa).

Over 1–77 (MQRSPLEKAS…KLINALRRCF (77 aa)) the chain is Cytoplasmic. Residues 78-98 (FWRFMFYGIILYLGEVTKAVQ) traverse the membrane as a helical segment. The ABC transmembrane type-1 1 domain occupies 81-365 (FMFYGIILYL…WAVQTWYDSL (285 aa)). Over 99-122 (PLLLGRIIASYDPDNKAERSIAIY) the chain is Extracellular. A helical membrane pass occupies residues 123–146 (LGIGLCLLFIVRTLLLHPAIFGLH). Residues 147–195 (HIGMQMRIAMFSLIYKKTLKLSSRVLDKISIGQLVSLLSNNLNKFDEGL) lie on the Cytoplasmic side of the membrane. A helical membrane pass occupies residues 196-216 (ALAHFVWIAPLQVTLLMGLLW). Topologically, residues 217 to 222 (ELLQAF) are extracellular. The chain crosses the membrane as a helical span at residues 223-243 (TFCGLAFLVVLAFLQAGLGKM). Topologically, residues 244–298 (MMKYRDQRAGKINERLVITSEIIENIQSVKAYCWEEAMEKIIENLRQTELKLTRK) are cytoplasmic. Residues 299-319 (AAYVRYLNSSAFFFSGFFVVF) form a helical membrane-spanning segment. Residues 320-339 (LSVLPYALLKGIILRKIFTT) are Extracellular-facing. The helical transmembrane segment at 340 to 358 (ISFCIVLRMAVTRQFPWAV) threads the bilayer. At 359–858 (QTWYDSLGAI…YLRYITVHKS (500 aa)) the chain is on the cytoplasmic side. ATP contacts are provided by residues Trp401, 457–464 (GSTGAGKT), and Gln492. The ABC transporter 1 domain maps to 423–645 (NGDNNLFFSN…RPDFSSKLMG (223 aa)). A lipid anchor (S-palmitoyl cysteine) is attached at Cys523. Phosphoserine is present on residues Ser548 and Ser659. The segment at 653 to 831 (TAERRNSIIT…EEINEEDLRD (179 aa)) is disordered R region. Ser669 is subject to Phosphoserine; by PKA. Phosphoserine is present on Ser685. Residue Lys687 forms a Glycyl lysine isopeptide (Lys-Gly) (interchain with G-Cter in ubiquitin) linkage. 2 positions are modified to phosphoserine: Ser699 and Ser711. A Phosphothreonine modification is found at Thr716. Residues Ser736, Ser767, Ser790, Ser795, and Ser813 each carry the phosphoserine modification. A helical membrane pass occupies residues 859-879 (LMFVLIWCLVVFLAEVAASLV). An ABC transmembrane type-1 2 domain is found at 859-1155 (LMFVLIWCLV…AVNSSIDVDS (297 aa)). Topologically, residues 880-918 (VLCLFPKILFQDKGNSTKSANNSYAVIITSTSSYYIFYI) are extracellular. N-linked (GlcNAc...) asparagine glycans are attached at residues Asn894 and Asn900. A discontinuously helical membrane pass occupies residues 919 to 939 (YVGVADTLLALGLFRGLPLVH). The Cytoplasmic segment spans residues 940-990 (TLITVSKTLHHKMLQSVLQAPMSTLNTLKTGGILNRFSKDIAVLDDLLPLT). A helical transmembrane segment spans residues 991–1011 (IFDFVQLLLIVIGAVVVVSVL). The Extracellular segment spans residues 1012-1013 (QP). The helical transmembrane segment at 1014 to 1034 (YIFLATVPVIAAFILLRAYFL) threads the bilayer. The Cytoplasmic segment spans residues 1035–1095 (HTSQQLKQLE…TANWFLYLST (61 aa)). The helical transmembrane segment at 1096-1116 (LRWFQMRIEMIFVIFFIAVTF) threads the bilayer. At 1117 to 1130 (ISILTTGEGEGRVG) the chain is on the extracellular side. The helical transmembrane segment at 1131-1151 (IILTLAMNIMGTLQWAVNSSI) threads the bilayer. Residues 1152-1481 (DVDSLMRSVS…TEEEVQETKI (330 aa)) are Cytoplasmic-facing. The 234-residue stretch at 1211–1444 (MTVKDLTAKY…KSLFRQAISP (234 aa)) folds into the ABC transporter 2 domain. Residues Tyr1220 and 1245 to 1252 (GRTGSGKS) contribute to the ATP site. The interval 1387-1481 (RTLKQAFADC…TEEEVQETKI (95 aa)) is interaction with GORASP2. Residue Cys1396 is the site of S-palmitoyl cysteine attachment. A disordered region spans residues 1452–1481 (PQRNSSRQKSRSNIAALKEETEEEVQETKI). Positions 1453-1464 (QRNSSRQKSRSN) are enriched in low complexity. A Phosphoserine modification is found at Ser1457. The segment covering 1471 to 1481 (ETEEEVQETKI) has biased composition (acidic residues). Residues 1479–1481 (TKI) carry the PDZ-binding motif.

The protein belongs to the ABC transporter superfamily. ABCC family. CFTR transporter (TC 3.A.1.202) subfamily. Monomer; does not require oligomerization for channel activity. May form oligomers in the membrane. Interacts with SLC26A3, SLC26A6 and NHERF1. Interacts with SHANK2. Interacts with MYO6. Interacts (via C-terminus) with GOPC (via PDZ domain); this promotes CFTR internalization and thereby decreases channel activity. Interacts with SLC4A7 through NHERF1. Found in a complex with MYO5B and RAB11A. Interacts with ANO1. Interacts with SLC26A8. Interacts with AHCYL1; the interaction increases CFTR activity. Interacts with CSE1L. The core-glycosylated form interacts with GORASP2 (via PDZ GRASP-type 1 domain) in respone to ER stress. Interacts with MARCHF2; the interaction leads to CFTR ubiqtuitination and degradation. Interacts with ADGRG2. Post-translationally, N-glycosylated. In terms of processing, phosphorylated; cAMP treatment promotes phosphorylation and activates the channel. Dephosphorylation decreases the ATPase activity (in vitro). Phosphorylation at PKA sites activates the channel. Phosphorylation at PKC sites enhances the response to phosphorylation by PKA. Phosphorylated by AMPK; this inhibits channel activity. Ubiquitinated, leading to its degradation in the lysosome. Deubiquitination by USP10 in early endosomes enhances its endocytic recycling to the cell membrane. Ubiquitinated by RNF185 during ER stress. Ubiquitinated by MARCHF2.

The protein localises to the apical cell membrane. Its subcellular location is the early endosome membrane. The protein resides in the cell membrane. It is found in the recycling endosome membrane. It localises to the endoplasmic reticulum membrane. The protein localises to the nucleus. It carries out the reaction ATP + H2O + closed Cl(-) channel = ADP + phosphate + open Cl(-) channel.. The enzyme catalyses chloride(in) = chloride(out). The catalysed reaction is hydrogencarbonate(in) = hydrogencarbonate(out). It catalyses the reaction ATP + H2O = ADP + phosphate + H(+). Epithelial ion channel that plays an important role in the regulation of epithelial ion and water transport and fluid homeostasis. Mediates the transport of chloride ions across the cell membrane. Possesses an intrinsic ATPase activity and utilizes ATP to gate its channel; the passive flow of anions through the channel is gated by cycles of ATP binding and hydrolysis by the ATP-binding domains. The ion channel is also permeable to HCO(3)(-); selectivity depends on the extracellular chloride concentration. Exerts its function also by modulating the activity of other ion channels and transporters. Contributes to the regulation of the pH and the ion content of the epithelial fluid layer. Modulates the activity of the epithelial sodium channel (ENaC) complex, in part by regulating the cell surface expression of the ENaC complex. May regulate bicarbonate secretion and salvage in epithelial cells by regulating the transporter SLC4A7. Can inhibit the chloride channel activity of ANO1. Plays a role in the chloride and bicarbonate homeostasis during sperm epididymal maturation and capacitation. The polypeptide is Cystic fibrosis transmembrane conductance regulator (Muntiacus reevesi (Reeves' muntjac)).